The sequence spans 393 residues: S-adenosylmethionine synthase 2 (393 aa).

E9 provides a ligand contact to Mg(2+). H15 contributes to the ATP binding site. E43 contributes to the K(+) binding site. Residues E56 and Q99 each coordinate L-methionine. Residues 167 to 169 (DGK), 235 to 238 (SGRF), D246, 252 to 253 (RK), A269, K273, and K277 each bind ATP. D246 is a binding site for L-methionine. K277 is an L-methionine binding site.

The protein belongs to the AdoMet synthase family. In terms of assembly, homotetramer. Mn(2+) serves as cofactor. Mg(2+) is required as a cofactor. The cofactor is Co(2+). It depends on K(+) as a cofactor. Mostly expressed in flowers, seedpods and roots, and, to a lower extent, in stems and leaves.

It localises to the cytoplasm. The enzyme catalyses L-methionine + ATP + H2O = S-adenosyl-L-methionine + phosphate + diphosphate. It functions in the pathway amino-acid biosynthesis; S-adenosyl-L-methionine biosynthesis; S-adenosyl-L-methionine from L-methionine: step 1/1. Its function is as follows. Catalyzes the formation of S-adenosylmethionine from methionine and ATP. The reaction comprises two steps that are both catalyzed by the same enzyme: formation of S-adenosylmethionine (AdoMet) and triphosphate, and subsequent hydrolysis of the triphosphate. In Brassica juncea (Indian mustard), this protein is S-adenosylmethionine synthase 2 (MSAMS2).